The chain runs to 198 residues: MIITTVYFILVAIAVLALIFGAILGFASVKLKVEADPIVEKIDALLPQSQCGQCGYPGCKPYAEAIANGDDITKCIPGGQTVIVNIAELMGVEPPTTDIEGDPAPMVAFIDEDMCIGCTKCIQACPVDAIIGTNKAMHTIIPDLCTGCELCVPPCPTDCISMIKVESTIHNWNWKFDPKLVIPIVDTTTTQKKLIKGE.

The tract at residues 1–28 (MIITTVYFILVAIAVLALIFGAILGFAS) is hydrophobic. Positions 34-92 (EADPIVEKIDALLPQSQCGQCGYPGCKPYAEAIANGDDITKCIPGGQTVIVNIAELMGV) constitute a 4Fe-4S domain. Cys51, Cys54, Cys59, Cys75, Cys115, Cys118, Cys121, Cys125, Cys145, Cys148, Cys151, and Cys155 together coordinate [4Fe-4S] cluster. 4Fe-4S ferredoxin-type domains follow at residues 106–135 (MVAF…GTNK) and 136–165 (AMHT…MIKV).

It belongs to the 4Fe4S bacterial-type ferredoxin family. RnfB subfamily. In terms of assembly, the complex is composed of six subunits: RnfA, RnfB, RnfC, RnfD, RnfE and RnfG. [4Fe-4S] cluster is required as a cofactor.

It localises to the cell inner membrane. Its function is as follows. Part of a membrane-bound complex that couples electron transfer with translocation of ions across the membrane. The protein is Ion-translocating oxidoreductase complex subunit B of Pasteurella multocida (strain Pm70).